The primary structure comprises 254 residues: MLSGLVTALRTLTLFPVPGKETDTFSRSLFWFPVVGLLLGSIQAALGYFTSLLGWNELSAAFVVLGGIALTRGMHADGLADLADGFWGGRTRESALRIMKDPNVGSFGAIALSGMMLLKWIAILKLVDIGAFACIAAGVLLARWVQVLLASALPYARREGGTAQSFVSGAGVVHIVVTSALTLLFLFPLLHADLYANLYAVVAMISAALAAALLTGLLSYRKIGGVTGDVLGAGSEVTELFVWIAAALSAALKA.

7 helical membrane passes run 29–49 (LFWF…LGYF), 50–70 (TSLL…GIAL), 98–118 (IMKD…MMLL), 121–141 (IAIL…GVLL), 170–190 (AGVV…FPLL), 198–218 (LYAV…TGLL), and 230–250 (VLGA…ALSA).

It belongs to the CobS family. It depends on Mg(2+) as a cofactor.

It is found in the cell inner membrane. It carries out the reaction alpha-ribazole + adenosylcob(III)inamide-GDP = adenosylcob(III)alamin + GMP + H(+). It catalyses the reaction alpha-ribazole 5'-phosphate + adenosylcob(III)inamide-GDP = adenosylcob(III)alamin 5'-phosphate + GMP + H(+). It functions in the pathway cofactor biosynthesis; adenosylcobalamin biosynthesis; adenosylcobalamin from cob(II)yrinate a,c-diamide: step 7/7. Joins adenosylcobinamide-GDP and alpha-ribazole to generate adenosylcobalamin (Ado-cobalamin). Also synthesizes adenosylcobalamin 5'-phosphate from adenosylcobinamide-GDP and alpha-ribazole 5'-phosphate. The protein is Adenosylcobinamide-GDP ribazoletransferase of Pelodictyon phaeoclathratiforme (strain DSM 5477 / BU-1).